A 602-amino-acid chain; its full sequence is uncharacterized protein (602 aa).

The 202-residue stretch at 271-472 folds into the MCM domain; the sequence is IIDILADILI…RDEEVAKYIF (202 aa). Position 315–322 (315–322) interacts with ATP; the sequence is TEVGIDKT.

The protein belongs to the MCM family.

This is an uncharacterized protein from Methanocaldococcus jannaschii (strain ATCC 43067 / DSM 2661 / JAL-1 / JCM 10045 / NBRC 100440) (Methanococcus jannaschii).